The chain runs to 740 residues: MAKRHKHYNARGGGKSKSKKSKPHGESRQRKNHRGGTSINRNRSELLLGGGDLMNPHQVEDYYFGSTAKKSSLRSGGFRPGRLTEADELDTGRLPSRKRPVEFIKAKELYDPSHDLILKLVKKNQHFDEPNSDGYNSSQSVSLREEEQDGEDEQQDVDTQEIPSKNTTVKIRSDNVVSENGDSESNSSANDAELFYVDMEGEEKTADNYIKTVDVDVQERSLKLNDCTEFQPTLRVGNVELNLKDGGSGSIEVDKPKSSYHPFHSYIQNVMENVQNYDSDDDFDENGNDVEQSFSISSDYEFESSEELITTGGTIEQFDSSMKSLTIEEIPGKTITASLTTKDISQGNSDNSSGDESFGFCEDDFEGSIGKVFVSNIRIGAGTHSYHVSCHEIYGDSEPRWVDDEMMNEIIAEMGLPEHRFRAYYKHLHKSFIEEEEEPEEYADIPFDDDDSDDSTADQCEPFAEDDLGEDLDDLVSYALKYNKQRKIEYHTTSLDIRGKGRNKHLIFDQTAGMDEDIKLMLQNKFATRQINKTKKRRAKEDFLSQSHASSTDLLMKYPYGLHIQNIKDEFDAFYRNDRQSITFPPLDPHGNKIIGKFAYNYFMKASNIGKGKSTKVYVEKTKKTRFNKPAYHIISQLLRKRPVFMRIDQKAPTDTQSTFNRTVRLKVSKENFNISEGQIVGEDAPEIGIDNIGRRMLEKLGWNIGQGLGAHGNQGINEPILAKVKKNKSGLRHTSENQQ.

Basic residues predominate over residues 1–22 (MAKRHKHYNARGGGKSKSKKSK). Disordered stretches follow at residues 1–52 (MAKR…GGGD), 67–93 (TAKK…DTGR), 126–191 (HFDE…SAND), and 435–464 (EEEE…EPFA). Polar residues predominate over residues 133–142 (DGYNSSQSVS). Acidic residues predominate over residues 146–159 (EEQDGEDEQQDVDT). The segment covering 162-190 (IPSKNTTVKIRSDNVVSENGDSESNSSAN) has biased composition (polar residues). A compositionally biased stretch (acidic residues) spans 435–456 (EEEEPEEYADIPFDDDDSDDST). One can recognise an R3H domain in the interval 561–623 (GLHIQNIKDE…STKVYVEKTK (63 aa)). The G-patch domain occupies 690–737 (IDNIGRRMLEKLGWNIGQGLGAHGNQGINEPILAKVKKNKSGLRHTSE).

The protein belongs to the SQS1 family.

The protein localises to the cytoplasm. It localises to the nucleus. Its function is as follows. May be involved in splicing. The chain is Protein SQS1 (SQS1) from Kluyveromyces lactis (strain ATCC 8585 / CBS 2359 / DSM 70799 / NBRC 1267 / NRRL Y-1140 / WM37) (Yeast).